Here is a 512-residue protein sequence, read N- to C-terminus: ATP synthase subunit beta 2 (512 aa).

174–181 contacts ATP; it reads GGAGVGKT. The span at 479-494 shows a compositional bias: basic and acidic residues; it reads RRKEEAAREADARRDA. Residues 479–512 are disordered; that stretch reads RRKEEAAREADARRDAAAGAASGSAGPQGAQHGR.

This sequence belongs to the ATPase alpha/beta chains family. As to quaternary structure, F-type ATPases have 2 components, CF(1) - the catalytic core - and CF(0) - the membrane proton channel. CF(1) has five subunits: alpha(3), beta(3), gamma(1), delta(1), epsilon(1). CF(0) has three main subunits: a(1), b(2) and c(9-12). The alpha and beta chains form an alternating ring which encloses part of the gamma chain. CF(1) is attached to CF(0) by a central stalk formed by the gamma and epsilon chains, while a peripheral stalk is formed by the delta and b chains.

It is found in the cell inner membrane. The enzyme catalyses ATP + H2O + 4 H(+)(in) = ADP + phosphate + 5 H(+)(out). Functionally, produces ATP from ADP in the presence of a proton gradient across the membrane. The catalytic sites are hosted primarily by the beta subunits. This Burkholderia thailandensis (strain ATCC 700388 / DSM 13276 / CCUG 48851 / CIP 106301 / E264) protein is ATP synthase subunit beta 2.